A 373-amino-acid chain; its full sequence is Carboxylesterase/phospholipase LipF (373 aa).

Residues 116–118 (HGG) carry the Involved in the stabilization of the negatively charged intermediate by the formation of the oxyanion hole motif. Catalysis depends on residues Ser186, Glu285, and His315.

It belongs to the 'GDXG' lipolytic enzyme family.

It carries out the reaction a carboxylic ester + H2O = an alcohol + a carboxylate + H(+). The catalysed reaction is a 1,2-diacyl-sn-glycero-3-phosphocholine + H2O = phosphocholine + a 1,2-diacyl-sn-glycerol + H(+). Functionally, a short-chain esterase and phospholipase. In Mycobacterium tuberculosis (strain CDC 1551 / Oshkosh), this protein is Carboxylesterase/phospholipase LipF.